Reading from the N-terminus, the 288-residue chain is Proteasome assembly chaperone 1 (288 aa).

Alanine 2 carries the post-translational modification N-acetylalanine. The disordered stretch occupies residues 13–35; the sequence is PCRAGTEDEEEEEEGRRETPEDR. The residue at position 18 (threonine 18) is a Phosphothreonine. Residues 26-35 show a composition bias toward basic and acidic residues; sequence EGRRETPEDR. Threonine 54 is modified (phosphothreonine). Serine 180 bears the Phosphoserine mark. The residue at position 264 (lysine 264) is an N6-acetyllysine.

The protein belongs to the PSMG1 family. As to quaternary structure, forms a heterodimer with PSMG2. The PSMG1-PSMG2 heterodimer interacts directly with the PSMA5 and PSMA7 proteasome alpha subunits. Post-translationally, degraded by the proteasome upon completion of 20S proteasome maturation. In terms of tissue distribution, in the adult, detected in brain, colon, leukocytes, breast and testis. Widely expressed in the fetus. Also expressed in a variety of proliferating cell lines.

It is found in the cytoplasm. Its subcellular location is the endoplasmic reticulum. Functionally, chaperone protein which promotes assembly of the 20S proteasome as part of a heterodimer with PSMG2. The PSMG1-PSMG2 heterodimer binds to the PSMA5 and PSMA7 proteasome subunits, promotes assembly of the proteasome alpha subunits into the heteroheptameric alpha ring and prevents alpha ring dimerization. The chain is Proteasome assembly chaperone 1 from Homo sapiens (Human).